Reading from the N-terminus, the 644-residue chain is Protein lin-9 (644 aa).

The interval 1–77 is disordered; sequence MSSAVRSPRK…GRDSPSVNSL (77 aa). Over residues 50-62 the composition is skewed to basic residues; sequence SIKRTGSPKKSPA.

The protein belongs to the lin-9 family. Component of the DRM complex, at least composed of lin-9, lin-35, lin-37, lin-52, lin-53, lin-54- dpl-1 and efl-1. Interacts with zft-11; the interaction is required to suppress the activation of non-neuronal genes in neurons.

The protein localises to the nucleus. In terms of biological role, synthetic multivulva class B (synMuvB) protein. SynMuvB proteins are required to repress the induction of vulval development by Ras signaling and probably act by forming the multiprotein DRM complex that represses transcription. Required for the development of sheath cells in the hermaphrodite gonad and for the development of the male spicule, rays and gonad. In association with the zinc finger protein ztf-11, negatively regulates the expression of non-neuronal genes during neurogenesis. The chain is Protein lin-9 from Caenorhabditis elegans.